The sequence spans 908 residues: DNA mismatch repair protein MutS (908 aa).

659 to 666 (GPNMAGKS) serves as a coordination point for ATP.

The protein belongs to the DNA mismatch repair MutS family.

Its function is as follows. This protein is involved in the repair of mismatches in DNA. It is possible that it carries out the mismatch recognition step. This protein has a weak ATPase activity. The sequence is that of DNA mismatch repair protein MutS from Parvibaculum lavamentivorans (strain DS-1 / DSM 13023 / NCIMB 13966).